A 173-amino-acid chain; its full sequence is MAIVLGVDPGSLKTGFGLVNHVSGRCEYIASGVIRMKSSDELPERLKTIFESLVEIIECYQPSEFAIEKVFMAKSAGSALKLGQARGAAIVAAVTNGLPVGEYEARKVKQSVVGSGAADKSQVQHMVRTLLHLTATPQEDAADALAIALCHINTQASLIRLAGSRQFRRGRLV.

Residues Asp-8, Glu-68, and Asp-140 contribute to the active site. Mg(2+) is bound by residues Asp-8, Glu-68, and Asp-140.

Belongs to the RuvC family. In terms of assembly, homodimer which binds Holliday junction (HJ) DNA. The HJ becomes 2-fold symmetrical on binding to RuvC with unstacked arms; it has a different conformation from HJ DNA in complex with RuvA. In the full resolvosome a probable DNA-RuvA(4)-RuvB(12)-RuvC(2) complex forms which resolves the HJ. It depends on Mg(2+) as a cofactor.

Its subcellular location is the cytoplasm. It catalyses the reaction Endonucleolytic cleavage at a junction such as a reciprocal single-stranded crossover between two homologous DNA duplexes (Holliday junction).. Functionally, the RuvA-RuvB-RuvC complex processes Holliday junction (HJ) DNA during genetic recombination and DNA repair. Endonuclease that resolves HJ intermediates. Cleaves cruciform DNA by making single-stranded nicks across the HJ at symmetrical positions within the homologous arms, yielding a 5'-phosphate and a 3'-hydroxyl group; requires a central core of homology in the junction. The consensus cleavage sequence is 5'-(A/T)TT(C/G)-3'. Cleavage occurs on the 3'-side of the TT dinucleotide at the point of strand exchange. HJ branch migration catalyzed by RuvA-RuvB allows RuvC to scan DNA until it finds its consensus sequence, where it cleaves and resolves the cruciform DNA. The chain is Crossover junction endodeoxyribonuclease RuvC from Saccharophagus degradans (strain 2-40 / ATCC 43961 / DSM 17024).